We begin with the raw amino-acid sequence, 631 residues long: 30-kDa cleavage and polyadenylation specificity factor 30 (631 aa).

The disordered stretch occupies residues 12-38 (EGGLDSGPVQNTASVPVAPPENSSSAA). 3 consecutive C3H1-type zinc fingers follow at residues 60-87 (SFRQTVCRHWLRGLCMKGDACGFLHQFD), 88-112 (KARMPICRFFRLYGECREQDCVYKH), and 114-141 (NEDIKECNMYKLGFCPNGPDCRYRHAKL). Residues 179-234 (QDRPQGQVPMQGQPQESGNLQQQQQQQPQQSQHQVSQTLIPNPADQTNRTSHPLPQ) are disordered. A compositionally biased stretch (low complexity) spans 182–215 (PQGQVPMQGQPQESGNLQQQQQQQPQQSQHQVSQ). Over residues 216 to 231 (TLIPNPADQTNRTSHP) the composition is skewed to polar residues. Positions 237–372 (NRYFVVKSNN…SVGEQLASLL (136 aa)) constitute a YTH domain. The span at 392-407 (EEEKAKGVNPESRAEN) shows a compositional bias: basic and acidic residues. Disordered regions lie at residues 392–447 (EEEK…RGIM) and 541–631 (PHMG…KKRR). Positions 412-432 (PFEDNEEEEEEEDESEEEEES) are enriched in acidic residues. Over residues 573 to 583 (KTPERSDERGV) the composition is skewed to basic and acidic residues. Phosphoserine occurs at positions 610 and 612. Over residues 621–631 (RSRHGEGKKRR) the composition is skewed to basic residues.

The protein belongs to the CPSF4/YTH1 family. In terms of assembly, component of the cleavage and polyadenylation specificity factor (CPSF) complex. Can form homodimers. Binds to calmodulin. Forms a complex with cleavage and polyadenylation specificity factor (CPSF) subunits CPSF73-I, CPSF73-II, CPSF100, CPSF160, CFIS2, FIPS3, FIPS5, PAPS2, PAPS3, CLPS3, PCFS1, PCFS4, CSTF50 and CSTF77. In terms of tissue distribution, expressed in seedlings, roots, leaves, siliques, stems and flowers.

The protein localises to the nucleus. It is found in the cytoplasm. With respect to regulation, endonuclease activity is repressed by the N-terminal domain of FIPS5. Nuclease activity is inhibited by zinc (&gt;100 uM), cadmium in a progressive manner (50 percent activity at 1 mM Cd(2+)), and high salt levels (e.g. KCl or NaCl &gt;600 mM). Stimulated by ATP in the presence of Zn(2+), even at inhibitory zinc concentrations. Elevated temperatures prevent RNA-binding at 55 degrees Celsius, but endonuclease activity at 70 degrees Celsius. The sulfhydryl reagent dithiothreitol (DTT) inhibits both RNA-binding and nuclease activities. In terms of biological role, component of the cleavage and polyadenylation specificity factor (CPSF) complex that play a key role in pre-mRNA 3'-end formation. May interact with poly(A) polymerase and other factors to bring about cleavage and poly(A) addition. Mediates poly(A) site selection. Binds RNA in a calcium-dependent manner. Exhibits endonuclease activity with an ability to nick and degrade linear as well as circular single-stranded RNA that leaves RNA 3' ends with hydroxyl groups, thus mediating processing of the pre-mRNA as a prelude to the polyadenylation. Involved in the post-transcriptional control, probably via poly(A) addition, of the responses of plants to stress, especially genes mediating tolerance to oxidative stress. Plays a role in the regulation of salicylic acid (SA) production via the control of messenger RNA 3' end processing, thus being a key component of programmed cell death and plant immune responses required for resistance to virulent Pseudomonas syringae pv tomato DC3000 (Pst). This chain is 30-kDa cleavage and polyadenylation specificity factor 30, found in Arabidopsis thaliana (Mouse-ear cress).